The sequence spans 409 residues: AT-rich interactive domain-containing protein 3C (409 aa).

A compositionally biased stretch (low complexity) spans 1–14 (MEALQRQQAARLAQ). The interval 1-91 (MEALQRQQAA…SPSSQSPGIQ (91 aa)) is disordered. Residues 19 to 30 (LAPPRLPLPQPP) show a composition bias toward pro residues. The span at 49-70 (AEEEEGAEDEEGETPLAEEETA) shows a compositional bias: acidic residues. The ARID domain occupies 110-202 (DPKRKEFLDD…YLYPYECETR (93 aa)). Disordered stretches follow at residues 233-274 (NLAG…PAHA), 306-333 (TREK…RLGA), and 385-409 (PVPA…STLP). The segment covering 235–257 (AGPTPRGAPGPASSHGPAPTATP) has biased composition (low complexity). One can recognise an REKLES domain in the interval 301–386 (LASEATREKL…GILFARRQPV (86 aa)). The segment covering 306–320 (TREKLAPEEPPEKRA) has biased composition (basic and acidic residues). Pro residues predominate over residues 393–402 (TNPPPLPSTG).

As to quaternary structure, interacts (via REKLES DOMAIN) with NPM1; the interaction mediates ARID3C nuclear shuttling.

It is found in the nucleus. In terms of biological role, transcription factor involved in monocyte-to-macrophage differentiation. Forms a complex with NPM1 to translocate to the nucleus, acting as a transcription factor that promotes the expression of the genes involved in macrophage differentiation, such as STAT3, STAT1 and JUNB. The polypeptide is AT-rich interactive domain-containing protein 3C (Arid3c) (Mus musculus (Mouse)).